We begin with the raw amino-acid sequence, 369 residues long: tRNA-specific 2-thiouridylase MnmA (369 aa).

Residues 12–19 (GMSGGVDS) and Met38 each bind ATP. Residues 98–100 (NPD) form an interaction with target base in tRNA region. Catalysis depends on Cys103, which acts as the Nucleophile. An intrachain disulfide couples Cys103 to Cys200. Gly128 lines the ATP pocket. The tract at residues 150–152 (KDQ) is interaction with tRNA. Cys200 functions as the Cysteine persulfide intermediate in the catalytic mechanism. An interaction with tRNA region spans residues 312–313 (RY).

This sequence belongs to the MnmA/TRMU family.

Its subcellular location is the cytoplasm. The catalysed reaction is S-sulfanyl-L-cysteinyl-[protein] + uridine(34) in tRNA + AH2 + ATP = 2-thiouridine(34) in tRNA + L-cysteinyl-[protein] + A + AMP + diphosphate + H(+). Catalyzes the 2-thiolation of uridine at the wobble position (U34) of tRNA, leading to the formation of s(2)U34. The protein is tRNA-specific 2-thiouridylase MnmA of Tolumonas auensis (strain DSM 9187 / NBRC 110442 / TA 4).